Reading from the N-terminus, the 662-residue chain is p-hydroxybenzoic acid efflux pump subunit AaeB (662 aa).

The next 11 membrane-spanning stretches (helical) occupy residues 22–42 (FAFKLTFAVVLSLFLGFHLQL), 52–72 (AAIVAGGPAFVAGGEPFSGAI), 78–98 (LRIVGTFIGCIGALAIIISTI), 102–122 (IVMMLLCCIWAGLCNWISSLV), 129–149 (IFGLAGYTTLIIILATQGTPM), 161–181 (EIVLGIACVIFADLLFAPRSI), 378–398 (LFWLSTGWSSGGICMMMIAVV), 415–435 (FLYGTIYSLPLGALMFMFILP), 439–459 (QSILLLCLSLGAMTFFLGVEV), 467–487 (LGALISTINVLLLNNPMTFNI), and 491–511 (LDNAIGQIIGCFVALMVILLI).

The protein belongs to the aromatic acid exporter ArAE (TC 2.A.85) family.

The protein localises to the cell inner membrane. Its function is as follows. Forms an efflux pump with AaeA. Could function as a metabolic relief valve, allowing to eliminate certain compounds when they accumulate to high levels in the cell. In Pectobacterium parmentieri (strain WPP163) (Pectobacterium wasabiae (strain WPP163)), this protein is p-hydroxybenzoic acid efflux pump subunit AaeB.